Consider the following 119-residue polypeptide: Large ribosomal subunit protein bL19 (119 aa).

Belongs to the bacterial ribosomal protein bL19 family.

Functionally, this protein is located at the 30S-50S ribosomal subunit interface and may play a role in the structure and function of the aminoacyl-tRNA binding site. In Pediococcus pentosaceus (strain ATCC 25745 / CCUG 21536 / LMG 10740 / 183-1w), this protein is Large ribosomal subunit protein bL19.